A 315-amino-acid chain; its full sequence is Eukaryotic translation initiation factor 2 subunit 1 (315 aa).

Residues 17 to 88 (EDVVMVNVRS…EKGYIDLSKR (72 aa)) enclose the S1 motif domain. Ser-49 carries the post-translational modification Phosphoserine; by HRI. Phosphoserine is present on Ser-52. An N6-acetyllysine modification is found at Lys-141. Phosphoserine is present on Ser-158. Phosphothreonine occurs at positions 279 and 281. Residues 293-315 (LERENAEVDGDDDAEEMEAKAED) are disordered. Positions 299–308 (EVDGDDDAEE) are enriched in acidic residues.

It belongs to the eIF-2-alpha family. Eukaryotic translation initiation factor 2 eIF2 is a heterotrimeric complex composed of an alpha (EIF2S1), a beta (EIF2S2) and a gamma (EIF2S3) chain. eIF2 is member of the 43S pre-initiation complex (43S PIC). eIF2 forms a complex with at least CELF1/CUGBP1, CALR, CALR3, EIF2S1, EIF2S2, HSP90B1 and HSPA5. Interaction with METAP2 protects EIF2S1 from inhibitory phosphorylation. Interacts with ABCF1 isoform 2. Associates with ribosomes. Interacts with DDX3X in an RNA-independent manner. Interacts with CDC123. In terms of assembly, (Microbial infection) Interacts with rotavirus A non-structural protein 2; this interaction probably plays a role in the sequestration of IF2A in viral factories. Interacts with rotavirus A non-structural protein 5; this interaction probably plays a role in its sequestration in viral factories. Post-translationally, phosphorylation at Ser-49 and Ser-52 stabilizes the eIF-2/GDP/eIF2B complex and prevents GDP/GTP exchange reaction, thus impairing the recycling of eIF-2 between successive rounds of initiation and leading to global inhibition of translation, while concomitantly initiating the preferential translation of integrated stress response (ISR)-specific mRNAs. Substrate for at least 4 kinases: EIF2AK1/HRI, EIF2AK2/PKR, EIF2AK3/PERK and EIF2AK4/GCN2. Phosphorylation on Ser-52 by the EIF2AK4/GCN2 protein kinase occurs in response to amino acid starvation and UV irradiation. Phosphorylation at Ser-52 by the EIF2AK3/PERK protein kinase occurs in response to the unfolded protein response. Phosphorylation at Ser-52 by EIF2AK1/HRI in response to mitochondrial damage promotes relocalization to the mitochondrial surface. (Microbial infection) Phosphorylation by vaccinia virus protein E3 and rotavirus A stabilizes the eIF-2/GDP/eIF2B complex and prevents GDP/GTP exchange reaction, thus impairing the recycling of eIF-2 between successive rounds of initiation and leading to global inhibition of translation.

Its subcellular location is the cytoplasm. The protein localises to the stress granule. The protein resides in the cytosol. It is found in the mitochondrion. With respect to regulation, activity is regulated by phosphorylation at Ser-49 and Ser-52, which stabilizes the eIF2/GDP/eIF2B complex and prevents the eIF2B-mediated exchange of GDP for GTP, thereby preventing the formation of the 43S pre-initiation complex (43S PIC). This results in the global attenuation of 5' cap-dependent protein synthesis and concomitant translation of ISR-specific mRNAs that contain a short upstream open reading frame (uORF) in their 5' UTR, such as ATF4, ATF5, DDIT3/CHOP and PPP1R15A/GADD34. Functionally, member of the eIF2 complex that functions in the early steps of protein synthesis by forming a ternary complex with GTP and initiator tRNA. This complex binds to a 40S ribosomal subunit, followed by mRNA binding to form a 43S pre-initiation complex (43S PIC). Junction of the 60S ribosomal subunit to form the 80S initiation complex is preceded by hydrolysis of the GTP bound to eIF2 and release of an eIF2-GDP binary complex. In order for eIF2 to recycle and catalyze another round of initiation, the GDP bound to eIF2 must exchange with GTP by way of a reaction catalyzed by eIF2B. EIF2S1/eIF2-alpha is a key component of the integrated stress response (ISR), required for adaptation to various stress: phosphorylation by metabolic-stress sensing protein kinases (EIF2AK1/HRI, EIF2AK2/PKR, EIF2AK3/PERK and EIF2AK4/GCN2) in response to stress converts EIF2S1/eIF2-alpha in a global protein synthesis inhibitor, leading to an attenuation of cap-dependent translation, while concomitantly initiating the preferential translation of ISR-specific mRNAs, such as the transcriptional activators ATF4 and QRICH1, and hence allowing ATF4- and QRICH1-mediated reprogramming. EIF2S1/eIF2-alpha also acts as an activator of mitophagy in response to mitochondrial damage: phosphorylation by EIF2AK1/HRI promotes relocalization to the mitochondrial surface, thereby triggering PRKN-independent mitophagy. In Homo sapiens (Human), this protein is Eukaryotic translation initiation factor 2 subunit 1.